Reading from the N-terminus, the 135-residue chain is MLSPQKTRFRKQHRGRMKGISYRGNNICFGKYGLKALEPAWITPRQIEAGRRAITRKFRRGGKIWVRVFPDKPVTVRSSETRMGSGKGSHKYFVAVVKPGLILYEIGGVTENIAKRAILIAASKMPMQTQFIISG.

Belongs to the universal ribosomal protein uL16 family. In terms of assembly, part of the 50S ribosomal subunit.

The protein resides in the plastid. The protein is Large ribosomal subunit protein uL16c of Epifagus virginiana (Beechdrops).